A 275-amino-acid polypeptide reads, in one-letter code: Phosphate import ATP-binding protein PstB (275 aa).

Positions 29–270 constitute an ABC transporter domain; the sequence is LEIKDLDLYY…PNKKKTEDYI (242 aa). 61–68 contributes to the ATP binding site; sequence GPSGCGKS.

This sequence belongs to the ABC transporter superfamily. Phosphate importer (TC 3.A.1.7) family. As to quaternary structure, the complex is composed of two ATP-binding proteins (PstB), two transmembrane proteins (PstC and PstA) and a solute-binding protein (PstS).

Its subcellular location is the cell inner membrane. It carries out the reaction phosphate(out) + ATP + H2O = ADP + 2 phosphate(in) + H(+). Part of the ABC transporter complex PstSACB involved in phosphate import. Responsible for energy coupling to the transport system. This Pseudoalteromonas translucida (strain TAC 125) protein is Phosphate import ATP-binding protein PstB.